We begin with the raw amino-acid sequence, 389 residues long: tRNA-specific 2-thiouridylase MnmA (389 aa).

Residues 35 to 42 and M61 each bind ATP; that span reads GMSGGVDS. Positions 121–123 are interaction with target base in tRNA; it reads NPD. The active-site Nucleophile is the C126. The cysteines at positions 126 and 223 are disulfide-linked. G151 provides a ligand contact to ATP. The tract at residues 173–175 is interaction with tRNA; it reads KDQ. Residue C223 is the Cysteine persulfide intermediate of the active site. Residues 335–336 are interaction with tRNA; sequence RY.

The protein belongs to the MnmA/TRMU family.

It localises to the cytoplasm. The catalysed reaction is S-sulfanyl-L-cysteinyl-[protein] + uridine(34) in tRNA + AH2 + ATP = 2-thiouridine(34) in tRNA + L-cysteinyl-[protein] + A + AMP + diphosphate + H(+). Catalyzes the 2-thiolation of uridine at the wobble position (U34) of tRNA, leading to the formation of s(2)U34. The polypeptide is tRNA-specific 2-thiouridylase MnmA (Actinobacillus pleuropneumoniae serotype 3 (strain JL03)).